Reading from the N-terminus, the 380-residue chain is Omega-3 fatty acid desaturase, endoplasmic reticulum (380 aa).

The helical transmembrane segment at 59–78 (VLVVTALAASAISFNSWFFW) threads the bilayer. The Histidine box-1 signature appears at 97–101 (HDCGH). The Histidine box-2 signature appears at 133-137 (HRTHH). The next 2 helical transmembrane spans lie at 208 to 231 (GVVTSTLCWGIVLSVLLYLSLTIG) and 238 to 256 (LYGVPYLIFVMWLDFVTYL). The Histidine box-3 signature appears at 300 to 304 (HVIHH).

The protein belongs to the fatty acid desaturase type 1 family.

The protein resides in the endoplasmic reticulum membrane. The protein operates within lipid metabolism; polyunsaturated fatty acid biosynthesis. Functionally, microsomal (ER) omega-3 fatty acid desaturase introduces the third double bond in the biosynthesis of 18:3 fatty acids, important constituents of plant membranes. It is thought to use cytochrome b5 as an electron donor and to act on fatty acids esterified to phosphatidylcholine and, possibly, other phospholipids. This chain is Omega-3 fatty acid desaturase, endoplasmic reticulum (ARG1), found in Vigna radiata var. radiata (Mung bean).